The following is a 264-amino-acid chain: uncharacterized protein (264 aa).

The helical transmembrane segment at 7–27 threads the bilayer; the sequence is LTLGICLVLLIILIVGYVIMT.

Belongs to the staphylococcal tandem lipoprotein family.

Its subcellular location is the cell membrane. This is an uncharacterized protein from Staphylococcus aureus (strain NCTC 8325 / PS 47).